The following is a 354-amino-acid chain: Large ribosomal subunit protein uL10 (354 aa).

2 stretches are compositionally biased toward acidic residues: residues 286 to 296 (DEEALPEELQD) and 307 to 345 (AEADDEDDTGNVEQTDESDADDADDADDADDADEEDGDG). Residues 286-354 (DEEALPEELQ…GGDALGDMFG (69 aa)) are disordered.

It belongs to the universal ribosomal protein uL10 family. As to quaternary structure, part of the 50S ribosomal subunit. Forms part of the ribosomal stalk which helps the ribosome interact with GTP-bound translation factors. Forms a heptameric L10(L12)2(L12)2(L12)2 complex, where L10 forms an elongated spine to which the L12 dimers bind in a sequential fashion.

Forms part of the ribosomal stalk, playing a central role in the interaction of the ribosome with GTP-bound translation factors. The protein is Large ribosomal subunit protein uL10 of Natronomonas pharaonis (strain ATCC 35678 / DSM 2160 / CIP 103997 / JCM 8858 / NBRC 14720 / NCIMB 2260 / Gabara) (Halobacterium pharaonis).